A 360-amino-acid chain; its full sequence is Phenylalanine--tRNA ligase alpha subunit (360 aa).

E260 is a Mg(2+) binding site.

Belongs to the class-II aminoacyl-tRNA synthetase family. Phe-tRNA synthetase alpha subunit type 1 subfamily. As to quaternary structure, tetramer of two alpha and two beta subunits. Mg(2+) is required as a cofactor.

It localises to the cytoplasm. The enzyme catalyses tRNA(Phe) + L-phenylalanine + ATP = L-phenylalanyl-tRNA(Phe) + AMP + diphosphate + H(+). In Agrobacterium fabrum (strain C58 / ATCC 33970) (Agrobacterium tumefaciens (strain C58)), this protein is Phenylalanine--tRNA ligase alpha subunit.